Reading from the N-terminus, the 77-residue chain is Dermatoxin-A1 (77 aa).

A signal peptide spans 1–22; the sequence is MAFLKKSLFLVLFLGLVPLFLC. Residues 23–42 constitute a propeptide that is removed on maturation; it reads ENEKREGENEKEENDDQSEE. At Gln-76 the chain carries Glutamine amide.

It belongs to the frog skin active peptide (FSAP) family. Dermatoxin subfamily. In terms of tissue distribution, expressed by the skin glands.

Its subcellular location is the secreted. Its function is as follows. Possesses a potent antimicrobial activity against Gram-positive and Gram-negative bacteria. Probably acts by disturbing membrane functions with its amphipathic structure. This chain is Dermatoxin-A1, found in Agalychnis annae (Blue-sided leaf frog).